The following is a 231-amino-acid chain: Class II histocompatibility antigen, B-L beta chain (231 aa).

Residues 1 to 89 (FFQWSATVEC…IVAPLTLQRR (89 aa)) form a beta-1 region. The Extracellular segment spans residues 1-194 (FFQWSATVEC…PGDVSRSKLL (194 aa)). Disulfide bonds link Cys-10–Cys-74 and Cys-111–Cys-167. A glycan (N-linked (GlcNAc...) asparagine) is linked at Asn-14. The interval 90–182 (EPKVRIFALQ…SLQQPITQRW (93 aa)) is beta-2. In terms of domain architecture, Ig-like C1-type spans 91–179 (PKVRIFALQS…EHTSLQQPIT (89 aa)). A connecting peptide region spans residues 183 to 194 (EPPGDVSRSKLL). Residues 195–219 (MGVGGFVLGLVYLALGIFFFLCSKK) form a helical membrane-spanning segment. The Cytoplasmic segment spans residues 220–231 (GQPDPTSPGILN).

It belongs to the MHC class II family.

The protein resides in the membrane. The sequence is that of Class II histocompatibility antigen, B-L beta chain from Gallus gallus (Chicken).